Reading from the N-terminus, the 141-residue chain is MAKKGAGATRGVSAVRPTRALPVGAYLTVADNSGAKVIQIIGVVEYHGTRRRLASAGVGDMVVATVKKGRPDMRHQVVRAVIIRQRKEYRRLDGMRVKFEDNAAVIVTPEGVPRGTEIRGPVAREAAERWVRIGSIASIIV.

The protein belongs to the universal ribosomal protein uL14 family. As to quaternary structure, part of the 50S ribosomal subunit. Forms a cluster with proteins L3 and L24e, part of which may contact the 16S rRNA in 2 intersubunit bridges.

Binds to 23S rRNA. Forms part of two intersubunit bridges in the 70S ribosome. In Pyrococcus furiosus (strain ATCC 43587 / DSM 3638 / JCM 8422 / Vc1), this protein is Large ribosomal subunit protein uL14.